Reading from the N-terminus, the 632-residue chain is Chaperone protein HtpG (632 aa).

Residues 1–339 form an a; substrate-binding region; that stretch reads MTQQTMSFQA…SSDLPLNVSR (339 aa). The segment at 340–559 is b; that stretch reads EILQESRDVK…DNDMSGYLQR (220 aa). The interval 560–632 is c; the sequence is MLKAAGQSAP…TNALLLSRAA (73 aa).

Belongs to the heat shock protein 90 family. Homodimer.

The protein localises to the cytoplasm. Its function is as follows. Molecular chaperone. Has ATPase activity. In Burkholderia pseudomallei (strain 1106a), this protein is Chaperone protein HtpG.